A 486-amino-acid chain; its full sequence is N-succinylglutamate 5-semialdehyde dehydrogenase (486 aa).

Position 220-225 (220-225) interacts with NAD(+); it reads GSSRTG. Residues E243 and C277 contribute to the active site.

Belongs to the aldehyde dehydrogenase family. AstD subfamily.

It catalyses the reaction N-succinyl-L-glutamate 5-semialdehyde + NAD(+) + H2O = N-succinyl-L-glutamate + NADH + 2 H(+). Its pathway is amino-acid degradation; L-arginine degradation via AST pathway; L-glutamate and succinate from L-arginine: step 4/5. Its function is as follows. Catalyzes the NAD-dependent reduction of succinylglutamate semialdehyde into succinylglutamate. The chain is N-succinylglutamate 5-semialdehyde dehydrogenase from Shewanella putrefaciens (strain CN-32 / ATCC BAA-453).